The sequence spans 216 residues: uncharacterized protein (216 aa).

The region spanning 18–47 (PPDSPIEDRCGSCNICVDSCPTGALVQGGQ) is the 4Fe-4S ferredoxin-type domain. The [4Fe-4S] cluster site is built by C27, C30, C33, C37, C79, C82, and C86.

This is an uncharacterized protein from Geobacillus stearothermophilus (Bacillus stearothermophilus).